Reading from the N-terminus, the 721-residue chain is Cytosolic carboxypeptidase 2 (721 aa).

Residues 43–71 (TASDMINSSSPSESSDSNLEEEQEESKPC) form a disordered region. A compositionally biased stretch (low complexity) spans 50 to 59 (SSSPSESSDS). The Peptidase M14 domain maps to 334–605 (YPYTYSKLQH…CFCDTLLDFC (272 aa)). Zn(2+)-binding residues include His-400, Glu-403, and His-496. The active-site Proton donor/acceptor is the Glu-569. A disordered region spans residues 645 to 721 (DIESSTSGSN…TQHGDTEDQS (77 aa)). The span at 647-660 (ESSTSGSNSTESDG) shows a compositional bias: low complexity. Positions 672–688 (GKKKLLRSRKERNRLRQ) are enriched in basic residues. The span at 703–714 (YSCQTLNATTQH) shows a compositional bias: polar residues.

This sequence belongs to the peptidase M14 family. Requires Zn(2+) as cofactor.

Its subcellular location is the cytoplasm. It is found in the cytosol. The protein resides in the cytoskeleton. It localises to the microtubule organizing center. The protein localises to the centrosome. Its subcellular location is the centriole. It is found in the cilium basal body. It carries out the reaction (L-glutamyl)(n+1)-gamma-L-glutamyl-L-glutamyl-[protein] + H2O = (L-glutamyl)(n)-gamma-L-glutamyl-L-glutamyl-[protein] + L-glutamate. Its function is as follows. Metallocarboxypeptidase that mediates deglutamylation of target proteins. Catalyzes the deglutamylation of polyglutamate side chains generated by post-translational polyglutamylation in proteins such as tubulins. Also removes gene-encoded polyglutamates from the carboxy-terminus of target proteins such as MYLK. Does not show detyrosinase or deglycylase activities from the carboxy-terminus of tubulin. Functionally, metallocarboxypeptidase that mediates deglutamylation of tubulin and non-tubulin target proteins. Catalyzes the removal of polyglutamate side chains present on the gamma-carboxyl group of glutamate residues within the C-terminal tail of tubulin protein. Specifically cleaves tubulin long-side-chains, while it is not able to remove the branching point glutamate. Also catalyzes the removal of polyglutamate residues from the carboxy-terminus of non-tubulin proteins. The sequence is that of Cytosolic carboxypeptidase 2 (zte25) from Danio rerio (Zebrafish).